A 929-amino-acid polypeptide reads, in one-letter code: Bifunctional uridylyltransferase/uridylyl-removing enzyme (929 aa).

The segment at 1-383 (MDSVTTEHKQ…RPTPAKRRVP (383 aa)) is uridylyltransferase. The uridylyl-removing stretch occupies residues 384-739 (DSDDFIVDNN…VGFDEVRGVT (356 aa)). An HD domain is found at 499–622 (VDEHLIRCVG…VQSVEQMKLL (124 aa)). 2 consecutive ACT domains span residues 740–822 (ELTI…VVAR) and 850–927 (VIEV…AVQP).

Belongs to the GlnD family. Requires Mg(2+) as cofactor.

It catalyses the reaction [protein-PII]-L-tyrosine + UTP = [protein-PII]-uridylyl-L-tyrosine + diphosphate. The enzyme catalyses [protein-PII]-uridylyl-L-tyrosine + H2O = [protein-PII]-L-tyrosine + UMP + H(+). With respect to regulation, uridylyltransferase (UTase) activity is inhibited by glutamine, while glutamine activates uridylyl-removing (UR) activity. Modifies, by uridylylation and deuridylylation, the PII regulatory proteins (GlnB and homologs), in response to the nitrogen status of the cell that GlnD senses through the glutamine level. Under low glutamine levels, catalyzes the conversion of the PII proteins and UTP to PII-UMP and PPi, while under higher glutamine levels, GlnD hydrolyzes PII-UMP to PII and UMP (deuridylylation). Thus, controls uridylylation state and activity of the PII proteins, and plays an important role in the regulation of nitrogen fixation and metabolism. This chain is Bifunctional uridylyltransferase/uridylyl-removing enzyme, found in Bradyrhizobium diazoefficiens (strain JCM 10833 / BCRC 13528 / IAM 13628 / NBRC 14792 / USDA 110).